The primary structure comprises 240 residues: 2,3,4,5-tetrahydropyridine-2,6-dicarboxylate N-acetyltransferase (240 aa).

This sequence belongs to the transferase hexapeptide repeat family. DapH subfamily.

The catalysed reaction is (S)-2,3,4,5-tetrahydrodipicolinate + acetyl-CoA + H2O = L-2-acetamido-6-oxoheptanedioate + CoA. The protein operates within amino-acid biosynthesis; L-lysine biosynthesis via DAP pathway; LL-2,6-diaminopimelate from (S)-tetrahydrodipicolinate (acetylase route): step 1/3. In terms of biological role, catalyzes the transfer of an acetyl group from acetyl-CoA to tetrahydrodipicolinate. This Bacillus mycoides (strain KBAB4) (Bacillus weihenstephanensis) protein is 2,3,4,5-tetrahydropyridine-2,6-dicarboxylate N-acetyltransferase.